Reading from the N-terminus, the 399-residue chain is MSNKLVLVLNCGSSSLKFAVIDAQTGDDQISGLAECFGLEDSRIKWKINGEKHESSLGAFTAHREAVEFIVNKILAGQPELAAQIQAVGHRIVHGGEKFTRSVIIDEHVIKGIEECSSLAPLHNPAHLIGIRAAIASFPKLPQVAVFDTAFHQSMPERAFIYALPYKLYREHGIRRYGMHGTSHLFVSREAAKVLNKPLEETNVICAHLGNGASVTAVKGGKSVDTSMGLTPLEGLVMGTRCGDLDPSIIYHLVHQLGYTLEEVNNLMNKQSGLLGISELTNDCRGIEEGYADGHKGATLALEIFCYRLAKYIASYTVPLGRLDAVVFTGGIGENSDIIREKVLNMLQIFNFHVDSERNKAARFGKKGIITTDNSTVAMVIPTNEEWVIAEDSIKLITK.

Mg(2+) is bound at residue Asn10. Lys17 provides a ligand contact to ATP. Arg91 contributes to the substrate binding site. The active-site Proton donor/acceptor is the Asp148. Residues 208–212 (HLGNG), 283–285 (DCR), and 331–335 (GIGEN) each bind ATP. Glu385 is a Mg(2+) binding site.

The protein belongs to the acetokinase family. Homodimer. Mg(2+) is required as a cofactor. Mn(2+) serves as cofactor.

The protein localises to the cytoplasm. It catalyses the reaction acetate + ATP = acetyl phosphate + ADP. The protein operates within metabolic intermediate biosynthesis; acetyl-CoA biosynthesis; acetyl-CoA from acetate: step 1/2. In terms of biological role, catalyzes the formation of acetyl phosphate from acetate and ATP. Can also catalyze the reverse reaction. In Shewanella sp. (strain MR-4), this protein is Acetate kinase.